The chain runs to 371 residues: D-erythrose-4-phosphate dehydrogenase (371 aa).

12-13 contributes to the NAD(+) binding site; it reads RI. Residues 154–156, R200, 213–214, and R236 contribute to the substrate site; these read SCT and TK. C155 acts as the Nucleophile in catalysis. N318 lines the NAD(+) pocket.

It belongs to the glyceraldehyde-3-phosphate dehydrogenase family. Epd subfamily. Homotetramer.

The protein resides in the cytoplasm. It carries out the reaction D-erythrose 4-phosphate + NAD(+) + H2O = 4-phospho-D-erythronate + NADH + 2 H(+). It participates in cofactor biosynthesis; pyridoxine 5'-phosphate biosynthesis; pyridoxine 5'-phosphate from D-erythrose 4-phosphate: step 1/5. Its function is as follows. Catalyzes the NAD-dependent conversion of D-erythrose 4-phosphate to 4-phosphoerythronate. This Psychromonas ingrahamii (strain DSM 17664 / CCUG 51855 / 37) protein is D-erythrose-4-phosphate dehydrogenase.